The following is a 447-amino-acid chain: Exodeoxyribonuclease 7 large subunit (447 aa).

It belongs to the XseA family. In terms of assembly, heterooligomer composed of large and small subunits.

The protein resides in the cytoplasm. It catalyses the reaction Exonucleolytic cleavage in either 5'- to 3'- or 3'- to 5'-direction to yield nucleoside 5'-phosphates.. Its function is as follows. Bidirectionally degrades single-stranded DNA into large acid-insoluble oligonucleotides, which are then degraded further into small acid-soluble oligonucleotides. The polypeptide is Exodeoxyribonuclease 7 large subunit (Pediococcus pentosaceus (strain ATCC 25745 / CCUG 21536 / LMG 10740 / 183-1w)).